Consider the following 241-residue polypeptide: tRNA (guanine-N(1)-)-methyltransferase (241 aa).

Residues G112 and 131–136 (LGDFVL) contribute to the S-adenosyl-L-methionine site.

Belongs to the RNA methyltransferase TrmD family. In terms of assembly, homodimer.

The protein localises to the cytoplasm. It carries out the reaction guanosine(37) in tRNA + S-adenosyl-L-methionine = N(1)-methylguanosine(37) in tRNA + S-adenosyl-L-homocysteine + H(+). Functionally, specifically methylates guanosine-37 in various tRNAs. In Clostridium novyi (strain NT), this protein is tRNA (guanine-N(1)-)-methyltransferase.